The following is a 343-amino-acid chain: Membrane progestin receptor delta (343 aa).

The Cytoplasmic segment spans residues 1–49; it reads MLSLKMPQLLRVHQVPRVFWEEGIMSGYRCPTSSALDCVLSSFQMTNET. Residues 50-70 traverse the membrane as a helical segment; that stretch reads VNIWTHFLPTWYFLWRLLALG. Residues 71–79 lie on the Extracellular side of the membrane; sequence SPGFRADPY. A helical membrane pass occupies residues 80–100; that stretch reads HLPLLVFLLPACLYPFASCCA. Over 101–112 the chain is Cytoplasmic; sequence HTFSSMSPRARH. A helical membrane pass occupies residues 113–133; it reads ICYFLDYGALSLYSLGCAFPY. Residues 134 to 146 are Extracellular-facing; sequence AAYSMPASWLHSR. Residues 147 to 167 traverse the membrane as a helical segment; the sequence is LHQLFVPAAALNSFLCTGLSC. Over 168 to 216 the chain is Cytoplasmic; that stretch reads YSRFPELEYPGFSKALRTAAFAYPFLFDNLPLFYRLRLCWGGAHSCGRD. A helical transmembrane segment spans residues 217 to 237; the sequence is ALSSNHGYHLLCALLSGFLFA. Over 238–257 the chain is Extracellular; sequence ARLPERLAPGRFDYIGHSHQ. A helical transmembrane segment spans residues 258–278; sequence LFHICAVLGTHFQLEAVLADM. At 279–291 the chain is on the cytoplasmic side; sequence GSRRAWLAVQEPT. The helical transmembrane segment at 292–312 threads the bilayer; the sequence is LGLGATVATLSLAVIGNLFII. The Extracellular segment spans residues 313–343; sequence AAFTASLLRMPGPCPLLQGSPLEEGLQAKQQ.

It belongs to the ADIPOR family. Homodimer.

The protein localises to the cell membrane. In terms of biological role, plasma membrane progesterone (P4) receptor coupled to G proteins. Seems to act through a G(s) mediated pathway. Involved in neurosteroid inhibition of apoptosis. May be involved in regulating rapid P4 signaling in the nervous system. Also binds dehydroepiandrosterone (DHEA), pregnanolone, pregnenolone and allopregnanolone. This is Membrane progestin receptor delta from Mus musculus (Mouse).